The chain runs to 366 residues: Galactoside alpha-(1,2)-fucosyltransferase 1 (366 aa).

Topologically, residues Met-1 to Gln-8 are cytoplasmic. The chain crosses the membrane as a helical; Signal-anchor for type II membrane protein span at residues Leu-9–Phe-25. Residues Leu-26–Pro-366 are Lumenal-facing. 3 N-linked (GlcNAc...) asparagine glycosylation sites follow: Asn-66, Asn-302, and Asn-328.

It belongs to the glycosyltransferase 11 family.

It is found in the golgi apparatus. Its subcellular location is the golgi stack membrane. It carries out the reaction a beta-D-galactosyl-(1-&gt;4)-N-acetyl-beta-D-glucosaminyl derivative + GDP-beta-L-fucose = an alpha-L-Fuc-(1-&gt;2)-beta-D-Gal-(1-&gt;4)-beta-D-GlcNAc derivative + GDP + H(+). It catalyses the reaction a ganglioside GA1 + GDP-beta-L-fucose = a ganglioside Fuc-GA1 + GDP + H(+). The enzyme catalyses a beta-D-Gal-(1-&gt;3)-beta-D-GlcNAc-(1-&gt;3)-beta-D-Gal-(1-&gt;4)-beta-D-Glc-(1&lt;-&gt;1')-Cer(d18:1(4E)) + GDP-beta-L-fucose = alpha-L-fucosyl-(1-&gt;2)- beta-D-galactosyl-(1-&gt;3)-N-acetyl-beta-D-glucosaminyl-(1-&gt;3)-beta-D-galactosyl-(1-&gt;4)-beta-D-glucosyl-(1&lt;-&gt;1')-N-acylsphing-4-enine + GDP + H(+). The catalysed reaction is a neolactoside nLc4Cer(d18:1(4E)) + GDP-beta-L-fucose = a neolactoside IV(2)-alpha-Fuc-nLc4Cer(d18:1(4E)) + GDP + H(+). It carries out the reaction a ganglioside GM1 + GDP-beta-L-fucose = a ganglioside Fuc-GM1 + GDP + H(+). It catalyses the reaction beta-D-galactosyl-(1-&gt;3)-N-acetyl-D-galactosamine + GDP-beta-L-fucose = alpha-L-fucosyl-(1-&gt;2)-beta-D-galactosyl-(1-&gt;3)-N-acetyl-D-galactosamine + GDP + H(+). The protein operates within protein modification; protein glycosylation. Catalyzes the transfer of L-fucose, from a guanosine diphosphate-beta-L-fucose, to the terminal galactose residue of glycoconjugates through an alpha(1,2) linkage leading to H antigen synthesis that is an intermediate substrate in the synthesis of ABO blood group antigens. H antigen is essential for maturation of the glomerular layer of the main olfactory bulb, in cell migration and early cell-cell contacts during tumor associated angiogenesis. Preferentially fucosylates soluble lactose and to a lesser extent fucosylates glycolipids gangliosides GA1 and GM1a. This Gorilla gorilla gorilla (Western lowland gorilla) protein is Galactoside alpha-(1,2)-fucosyltransferase 1.